The primary structure comprises 198 residues: MSISLFGRIVSQQFSGIRAAGPGRSLYLPFTLLLKQPGAYKVSLHRYVHSTQTKSHLSFLMNNNDITPFQKFTVKVLKEQCKSRGLKLSGRKSDLLQRLITHDSCSNKKSSVKINEPKKKRILINDPIKITKKLVSDKTFRTIEKNISSLQNTPVIETPCDVHSHLQPRDRIFLLGFFMLSCLWWNLEPQESKPTIDH.

The transit peptide at 1–55 (MSISLFGRIVSQQFSGIRAAGPGRSLYLPFTLLLKQPGAYKVSLHRYVHSTQTKS) directs the protein to the mitochondrion. The 35-residue stretch at 69-103 (FQKFTVKVLKEQCKSRGLKLSGRKSDLLQRLITHD) folds into the SAP domain. The helical transmembrane segment at 172–187 (IFLLGFFMLSCLWWNL) threads the bilayer.

It belongs to the AIM34 family.

The protein localises to the mitochondrion membrane. This Saccharomyces cerevisiae (strain JAY291) (Baker's yeast) protein is Altered inheritance of mitochondria protein 34, mitochondrial (AIM34).